The primary structure comprises 569 residues: Anti-Muellerian hormone type-2 receptor (569 aa).

The first 17 residues, 1–17 (MLGTLGLWALLPAAVQA), serve as a signal peptide directing secretion. Residues 18–148 (PPNRRTCVFF…AAPGESPWMA (131 aa)) lie on the Extracellular side of the membrane. Cystine bridges form between Cys55/Cys79 and Cys92/Cys109. Asn66 is a glycosylation site (N-linked (GlcNAc...) asparagine). N-linked (GlcNAc...) asparagine glycosylation is present at Asn119. A helical transmembrane segment spans residues 149 to 169 (LALLGLVLLLLLLLGGIVVAL). Topologically, residues 170-569 (LQRKAYRVQS…PGAACASSDV (400 aa)) are cytoplasmic. Positions 201-511 (LCFSQVIREG…RLVALVHPQE (311 aa)) constitute a Protein kinase domain. ATP contacts are provided by residues 207–215 (IREGGHAAV) and Lys228. Residue Asp331 is the Proton acceptor of the active site. Residues 512-535 (AQPCPEGRPHSHPEDWPPAPAPAP) form a disordered region.

The protein belongs to the protein kinase superfamily. TKL Ser/Thr protein kinase family. TGFB receptor subfamily. Interacts with type I receptor ACVR1. Mg(2+) is required as a cofactor. It depends on Mn(2+) as a cofactor.

Its subcellular location is the membrane. It catalyses the reaction L-threonyl-[receptor-protein] + ATP = O-phospho-L-threonyl-[receptor-protein] + ADP + H(+). It carries out the reaction L-seryl-[receptor-protein] + ATP = O-phospho-L-seryl-[receptor-protein] + ADP + H(+). Functionally, on ligand binding, forms a receptor complex consisting of two type II and two type I transmembrane serine/threonine kinases. Type II receptors phosphorylate and activate type I receptors which autophosphorylate, then bind and activate SMAD transcriptional regulators. Receptor for anti-Muellerian hormone. The polypeptide is Anti-Muellerian hormone type-2 receptor (AMHR2) (Oryctolagus cuniculus (Rabbit)).